Consider the following 455-residue polypeptide: CDP-diacylglycerol--serine O-phosphatidyltransferase (455 aa).

PLD phosphodiesterase domains are found at residues 134-160 and 356-383; these read VFGV…NNVY and GDNT…NPRA.

It belongs to the CDP-alcohol phosphatidyltransferase class-II family. As to quaternary structure, multimeric.

The protein localises to the cytoplasm. It is found in the cell inner membrane. The catalysed reaction is a CDP-1,2-diacyl-sn-glycerol + L-serine = a 1,2-diacyl-sn-glycero-3-phospho-L-serine + CMP + H(+). The chain is CDP-diacylglycerol--serine O-phosphatidyltransferase (pssA) from Haemophilus influenzae (strain ATCC 51907 / DSM 11121 / KW20 / Rd).